Reading from the N-terminus, the 629-residue chain is Kelch-like protein 13 (629 aa).

The BTB domain maps to 66 to 135 (CDVTLVPGDG…IYTAKLSLNM (70 aa)). A BACK domain is found at 170 to 271 (CVEVGRIANT…TPQDLINYVQ (102 aa)). Kelch repeat units lie at residues 315–363 (HLVT…VIGN), 364–415 (FLYV…ALKG), 416–462 (HLYA…VYGG), 464–509 (MYIS…TVGD), 511–561 (LYVI…VFEN), and 562–610 (KIYV…TLTV).

Component of the BCR(KLHL9-KLHL13) E3 ubiquitin ligase complex, at least composed of CUL3, KLHL9, KLHL13 and RBX1. Interacts with AURKB.

It participates in protein modification; protein ubiquitination. Functionally, substrate-specific adapter of a BCR (BTB-CUL3-RBX1) E3 ubiquitin-protein ligase complex required for mitotic progression and cytokinesis. The BCR(KLHL9-KLHL13) E3 ubiquitin ligase complex mediates the ubiquitination of AURKB and controls the dynamic behavior of AURKB on mitotic chromosomes and thereby coordinates faithful mitotic progression and completion of cytokinesis. This Gallus gallus (Chicken) protein is Kelch-like protein 13 (KLHL13).